Reading from the N-terminus, the 161-residue chain is Putative pre-16S rRNA nuclease (161 aa).

It belongs to the YqgF nuclease family.

The protein localises to the cytoplasm. Could be a nuclease involved in processing of the 5'-end of pre-16S rRNA. In Prochlorococcus marinus (strain MIT 9313), this protein is Putative pre-16S rRNA nuclease.